A 72-amino-acid chain; its full sequence is VKRPMNAFMVWSQSRAGKIMEQSPDMHNAEISKRRGKRWKLLKDSDKIPFIRAAERLRLKHMADYPDYKYRP.

Residues 1 to 69 (VKRPMNAFMV…KHMADYPDYK (69 aa)) constitute a DNA-binding region (HMG box).

It is found in the nucleus. This Alligator mississippiensis (American alligator) protein is SRY-related protein AES6.